A 554-amino-acid polypeptide reads, in one-letter code: Glutamine--tRNA ligase (554 aa).

The 'HIGH' region motif lies at 34-44; it reads PEPNGYLHIGH. ATP is bound by residues 35 to 37 and 41 to 47; these read EPN and HIGHAKS. The L-glutamine site is built by D67 and Y212. ATP contacts are provided by residues T231, 261-262, and 269-271; these read RL and MSK. Residues 268–272 carry the 'KMSKS' region motif; the sequence is VMSKR. Residues 317-324 are interaction with tRNA; sequence TKQDNTIE.

This sequence belongs to the class-I aminoacyl-tRNA synthetase family. Monomer.

Its subcellular location is the cytoplasm. It catalyses the reaction tRNA(Gln) + L-glutamine + ATP = L-glutaminyl-tRNA(Gln) + AMP + diphosphate. This is Glutamine--tRNA ligase from Shigella dysenteriae serotype 1 (strain Sd197).